We begin with the raw amino-acid sequence, 475 residues long: Aspartyl/glutamyl-tRNA(Asn/Gln) amidotransferase subunit B (475 aa).

It belongs to the GatB/GatE family. GatB subfamily. Heterotrimer of A, B and C subunits.

The enzyme catalyses L-glutamyl-tRNA(Gln) + L-glutamine + ATP + H2O = L-glutaminyl-tRNA(Gln) + L-glutamate + ADP + phosphate + H(+). It catalyses the reaction L-aspartyl-tRNA(Asn) + L-glutamine + ATP + H2O = L-asparaginyl-tRNA(Asn) + L-glutamate + ADP + phosphate + 2 H(+). Functionally, allows the formation of correctly charged Asn-tRNA(Asn) or Gln-tRNA(Gln) through the transamidation of misacylated Asp-tRNA(Asn) or Glu-tRNA(Gln) in organisms which lack either or both of asparaginyl-tRNA or glutaminyl-tRNA synthetases. The reaction takes place in the presence of glutamine and ATP through an activated phospho-Asp-tRNA(Asn) or phospho-Glu-tRNA(Gln). The protein is Aspartyl/glutamyl-tRNA(Asn/Gln) amidotransferase subunit B of Staphylococcus epidermidis (strain ATCC 12228 / FDA PCI 1200).